Consider the following 251-residue polypeptide: uncharacterized protein (251 aa).

The next 7 membrane-spanning stretches (helical) occupy residues 48-68, 88-108, 110-130, 132-152, 158-178, 184-204, and 209-229; these read WMVG…VELI, VLWG…LVAN, IPLL…FIWV, AMVW…GSSF, IGVS…GLFV, IIGC…MPVL, and GVSW…AYLL.

To M.tuberculosis Rv1337.

The protein localises to the cell membrane. This is an uncharacterized protein from Mycobacterium leprae (strain TN).